Reading from the N-terminus, the 439-residue chain is FK506-binding protein 59 (439 aa).

PPIase FKBP-type domains lie at 32–120 (GCTV…LGWK) and 149–235 (GAFV…VDCG). TPR repeat units lie at residues 252-285 (AKVY…LPTT), 297-330 (VATH…DKNN), and 331-364 (VKAL…EPGN).

As to quaternary structure, interacts with inaD and trpl, and may be part of the inaD signaling complex. In terms of tissue distribution, expression in the embryo is limited to three tissues: lymph glands, Garland cells and oenocyte cells.

The enzyme catalyses [protein]-peptidylproline (omega=180) = [protein]-peptidylproline (omega=0). In terms of biological role, may have a role in phototransduction; inhibits or prevents Ca(2+) induced stimulation of the trpl ion channel. The chain is FK506-binding protein 59 from Drosophila melanogaster (Fruit fly).